Reading from the N-terminus, the 58-residue chain is Amyloid-beta precursor protein (58 aa).

Topologically, residues 1-34 (ISEVKMDAEFRHDSGYEVHHQKLVFFAEDVGSNK) are extracellular. His-12, Tyr-16, His-19, and His-20 together coordinate Cu(2+). Positions 12, 16, 19, and 20 each coordinate Zn(2+). A helical membrane pass occupies residues 35–58 (GAIIGLMVGGVVIATVIVITLVML).

Belongs to the APP family. As to quaternary structure, binds, via its C-terminus, to the PID domain of several cytoplasmic proteins, including APBB family members, the APBA family, MAPK8IP1, SHC1 and NUMB and DAB1. Binding to DAB1 inhibits its serine phosphorylation. Interacts (via NPXY motif) with DAB2 (via PID domain); the interaction is impaired by tyrosine phosphorylation of the NPXY motif. Also interacts with GPCR-like protein BPP, APPBP1, IB1, KNS2 (via its TPR domains), APPBP2 (via BaSS) and DDB1. In vitro, it binds MAPT via the MT-binding domains. Associates with microtubules in the presence of ATP and in a kinesin-dependent manner. Interacts, through a C-terminal domain, with GNAO1. Interacts with CPEB1, ANKS1B and AGER. Interacts with ITM2B. Interacts with ITM2C. Interacts with IDE. Can form homodimers; dimerization is enhanced in the presence of Cu(2+) ions. Can form homodimers; this is promoted by heparin binding. Interacts with SORL1 (via N-terminal ectodomain); this interaction retains APP in the trans-Golgi network and reduces processing into soluble APP-alpha and amyloid-beta peptides. Interacts with PLD3. Interacts with VDAC1. Interacts with NSG1; could regulate APP processing. Amyloid-beta protein 42 interacts with FPR2. Interacts with LRRK2. Interacts (via cytoplasmic domain) with KIF5B. Interacts (via C-terminus) with APBB2/FE65L1 (via C-terminus). Interacts (via intracellular domain) with APBB3. Post-translationally, proteolytically processed under normal cellular conditions. Cleavage either by alpha-secretase, beta-secretase or theta-secretase leads to generation and extracellular release of soluble APP peptides, S-APP-alpha and S-APP-beta, and the retention of corresponding membrane-anchored C-terminal fragments, C80, C83 and C99. Subsequent processing of C80 and C83 by gamma-secretase yields P3 peptides. This is the major secretory pathway and is non-amyloidogenic. Alternatively, presenilin/nicastrin-mediated gamma-secretase processing of C99 releases the amyloid-beta proteins, amyloid-beta protein 40 and amyloid-beta protein 42, major components of amyloid plaques, and the cytotoxic C-terminal fragments, gamma-CTF(50), gamma-CTF(57) and gamma-CTF(59). PSEN1 cleavage is more efficient with C83 than with C99 as substrate (in vitro). Amyloid-beta protein 40 and Amyloid-beta protein 42 are cleaved by ACE. Many other minor amyloid-beta peptides, amyloid-beta 1-X peptides, are found in cerebral spinal fluid (CSF) including the amyloid-beta X-15 peptides, produced from the cleavage by alpha-secretase.

The protein resides in the cell membrane. The protein localises to the membrane. It is found in the perikaryon. It localises to the cell projection. Its subcellular location is the growth cone. The protein resides in the clathrin-coated pit. The protein localises to the early endosome. It is found in the cytoplasmic vesicle. It localises to the secreted. Its subcellular location is the cell surface. The protein resides in the nucleus. The protein localises to the cytoplasm. In terms of biological role, functions as a cell surface receptor and performs physiological functions on the surface of neurons relevant to neurite growth, neuronal adhesion and axonogenesis. Interaction between APP molecules on neighboring cells promotes synaptogenesis. Involved in cell mobility and transcription regulation through protein-protein interactions. Can promote transcription activation through binding to APBB1-KAT5 and inhibit Notch signaling through interaction with Numb. Couples to apoptosis-inducing pathways such as those mediated by G(o) and JIP. Inhibits G(o)-alpha ATPase activity. Acts as a kinesin I membrane receptor, mediating the axonal transport of beta-secretase and presenilin 1. By acting as a kinesin I membrane receptor, plays a role in axonal anterograde transport of cargo towards synapses in axons. May be involved in copper homeostasis/oxidative stress through copper ion reduction. In vitro, copper-metallated APP induces neuronal death directly or is potentiated through Cu(2+)-mediated low-density lipoprotein oxidation. Can regulate neurite outgrowth through binding to components of the extracellular matrix such as heparin and collagen I and IV. Induces a AGER-dependent pathway that involves activation of p38 MAPK, resulting in internalization of amyloid-beta peptide and mitochondrial dysfunction in cultured cortical neurons. Provides Cu(2+) ions for GPC1 which are required for release of nitric oxide (NO) and subsequent degradation of the heparan sulfate chains on GPC1. The polypeptide is Amyloid-beta precursor protein (APP) (Canis lupus familiaris (Dog)).